A 518-amino-acid chain; its full sequence is Gypsy retrotransposon integrase-like protein 1 (518 aa).

The 159-residue stretch at 135-293 (VVGNPWSVVT…PYFQMFNRNP (159 aa)) folds into the Integrase catalytic domain. The segment at 326 to 348 (NQTPAAGQMESSTSEELSKSKVA) is disordered. S498 carries the post-translational modification Phosphoserine.

The chain is Gypsy retrotransposon integrase-like protein 1 (GIN1) from Rattus norvegicus (Rat).